The following is a 195-amino-acid chain: GTP-dependent dephospho-CoA kinase (195 aa).

GTP contacts are provided by Asp-49, Val-50, Asp-68, Glu-127, and Asp-150.

The protein belongs to the GTP-dependent DPCK family.

It catalyses the reaction 3'-dephospho-CoA + GTP = GDP + CoA + H(+). It functions in the pathway cofactor biosynthesis; coenzyme A biosynthesis. In terms of biological role, catalyzes the GTP-dependent phosphorylation of the 3'-hydroxyl group of dephosphocoenzyme A to form coenzyme A (CoA). The sequence is that of GTP-dependent dephospho-CoA kinase from Methanosarcina barkeri (strain Fusaro / DSM 804).